Consider the following 244-residue polypeptide: Centromere protein H (244 aa).

Methionine 1 is modified (N-acetylmethionine). The segment at methionine 1–proline 33 is disordered. Serine 16 is subject to Phosphoserine. A compositionally biased stretch (low complexity) spans proline 22–alanine 31. Lysine 64 participates in a covalent cross-link: Glycyl lysine isopeptide (Lys-Gly) (interchain with G-Cter in SUMO2). At threonine 65 the chain carries Phosphothreonine. Coiled-coil stretches lie at residues proline 66 to glutamine 104 and aspartate 146 to serine 189.

Belongs to the CENP-H/MCM16 family. As to quaternary structure, self-associates. Component of the CENPA-NAC complex, at least composed of CENPA, CENPC, CENPH, CENPM, CENPN, CENPT and CENPU. The CENPA-NAC complex interacts with the CENPA-CAD complex, composed of CENPI, CENPK, CENPL, CENPO, CENPP, CENPQ, CENPR and CENPS. Interacts with KIF2C and NDC80.

It is found in the nucleus. The protein localises to the chromosome. The protein resides in the centromere. Its subcellular location is the kinetochore. In terms of biological role, component of the CENPA-NAC (nucleosome-associated) complex, a complex that plays a central role in assembly of kinetochore proteins, mitotic progression and chromosome segregation. The CENPA-NAC complex recruits the CENPA-CAD (nucleosome distal) complex and may be involved in incorporation of newly synthesized CENPA into centromeres. This is Centromere protein H (CENPH) from Bos taurus (Bovine).